The sequence spans 1161 residues: Cell wall protein DAN4 (1161 aa).

The N-terminal stretch at 1 to 19 is a signal peptide; sequence MVNISIVAGIVALATSAAA. 4 disordered regions span residues 123–309, 326–345, 354–547, and 691–713; these read TSTS…SASS, TPAT…STTN, TTTS…SSFG, and STDS…SSTA. The interval 134–286 is 46 X 3 AA tandem repeats of T-[SP]-T; that stretch reads TSTTPTTTIT…TTSTTSTTST (153 aa). Low complexity predominate over residues 354 to 372; the sequence is TTTSDTYISSSSPSQVTSS. 14 repeat units span residues 373–384, 385–396, 397–408, 409–420, 421–432, 433–444, 445–456, 457–468, 469–480, 481–492, 493–504, 505–516, 517–528, and 529–540. Positions 373–540 are 14 X 12 AA approximate tandem repeats; it reads AEPTTVSEVT…PIRSSQVTTT (168 aa). Residues 373-547 are compositionally biased toward polar residues; the sequence is AEPTTVSEVT…TTTEPVSSFG (175 aa). A run of 2 repeats spans residues 826–913 and 914–1001. Residues 826-1040 form a 2.5 X 88 AA approximate tandem repeats region; sequence EDSVLTKTQV…SPVSSFNSKA (215 aa). The stretch at 1002-1040 is one 2-3; truncated repeat; the sequence is EDVASTKTELLTMETTITSCSGGICTTLMSPVSSFNSKA. N1137 is lipidated: GPI-anchor amidated asparagine. The propeptide at 1138-1161 is removed in mature form; that stretch reads GAYNFDKDNIFGTAIVAVVALLLL.

It belongs to the SRP1/TIP1 family. Post-translationally, extensively O-glycosylated. In terms of processing, the GPI-anchor is attached to the protein in the endoplasmic reticulum and serves to target the protein to the cell surface. There, the glucosamine-inositol phospholipid moiety is cleaved off and the GPI-modified mannoprotein is covalently attached via its lipidless GPI glycan remnant to the 1,6-beta-glucan of the outer cell wall layer.

Its subcellular location is the secreted. The protein resides in the cell wall. It is found in the cell membrane. In terms of biological role, component of the cell wall. This is Cell wall protein DAN4 from Saccharomyces cerevisiae (strain ATCC 204508 / S288c) (Baker's yeast).